Reading from the N-terminus, the 238-residue chain is C-type lectin domain family 4 member A (238 aa).

Residues 1–48 lie on the Cytoplasmic side of the membrane; the sequence is MASEITYAEVKFKNESNSLHTYSESPAAPREKPIRDLRKPGSPSLLLT. Residues 5–10 carry the ITIM motif motif; that stretch reads ITYAEV. A helical; Signal-anchor for type II membrane protein membrane pass occupies residues 49-69; that stretch reads SLMLLLLLLAITFLVAFIIYF. The Extracellular segment spans residues 70-238; it reads QKYSQLLEEK…SVCQMKKINL (169 aa). A glycan (N-linked (GlcNAc...) asparagine) is linked at N91. Residues C107 and C118 are joined by a disulfide bond. In terms of domain architecture, C-type lectin spans 126 to 233; sequence SSASWNKSEE…SLKQKSVCQM (108 aa). N-linked (GlcNAc...) asparagine glycans are attached at residues N131 and N136. Intrachain disulfides connect C137–C231 and C205–C223. Ca(2+)-binding residues include V146, E152, E197, S199, and E203. Alpha-D-mannopyranose-binding positions include 197 to 199 and E203; that span reads EPS. 209–211 contributes to the N-acetyl-D-glucosamine binding site; the sequence is IYR. Positions 219 and 220 each coordinate Ca(2+).

In terms of assembly, may interact with PTPN6 via its ITIM site. Expressed in splenic antigen-presenting cells including B-cells, monocytes/macrophages, and dendritic cells (at protein level). Expressed in spleen and lymph node and slightly increased with dendritic cell maturation.

Its subcellular location is the cell membrane. Its function is as follows. May be involved in regulating immune reactivity. May play a role in modulating dendritic cells (DC) differentiation and/or maturation. May be involved in the inhibition of B-cell-receptor-mediated calcium mobilization and protein tyrosine phosphorylation. Functionally, C-type lectin receptor that binds carbohydrates mannose and fucose but also weakly interacts with N-acetylglucosamine (GlcNAc) in a Ca(2+)-dependent manner. Involved in regulating immune reactivity. Once triggered by antigen, it is internalized by clathrin-dependent endocytosis and delivers its antigenic cargo into the antigen presentation pathway resulting in cross-priming of CD8(+) T cells. This cross-presentation and cross-priming are enhanced by TLR7 and TLR8 agonists with increased expansion of the CD8(+) T cells, high production of IFNG and TNF with reduced levels of IL4, IL5 and IL13. In plasmacytoid dendritic cells, inhibits TLR9-mediated IFNA and TNF production. May be involved via its ITIM motif (immunoreceptor tyrosine-based inhibitory motifs) in the inhibition of B-cell-receptor-mediated calcium mobilization and protein tyrosine phosphorylation. This chain is C-type lectin domain family 4 member A (Clec4a), found in Mus musculus (Mouse).